The primary structure comprises 313 residues: Homoserine O-succinyltransferase (313 aa).

The active-site Acyl-thioester intermediate is Cys142. Substrate is bound by residues Lys163 and Ser192. The active-site Proton acceptor is the His235. Residue Glu237 is part of the active site. Position 249 (Arg249) interacts with substrate.

It belongs to the MetA family.

The protein resides in the cytoplasm. The enzyme catalyses L-homoserine + succinyl-CoA = O-succinyl-L-homoserine + CoA. It participates in amino-acid biosynthesis; L-methionine biosynthesis via de novo pathway; O-succinyl-L-homoserine from L-homoserine: step 1/1. Transfers a succinyl group from succinyl-CoA to L-homoserine, forming succinyl-L-homoserine. The protein is Homoserine O-succinyltransferase of Aliivibrio fischeri (strain MJ11) (Vibrio fischeri).